The chain runs to 164 residues: Protein SprT (164 aa).

In terms of domain architecture, SprT-like spans 13 to 156 (YQQAEAFFKR…LCKRCREILV (144 aa)). Histidine 69 contacts Zn(2+). Glutamate 70 is a catalytic residue. Zn(2+) is bound at residue histidine 73.

This sequence belongs to the SprT family. Requires Zn(2+) as cofactor.

Its subcellular location is the cytoplasm. The protein is Protein SprT of Pseudomonas putida (strain ATCC 700007 / DSM 6899 / JCM 31910 / BCRC 17059 / LMG 24140 / F1).